Reading from the N-terminus, the 883-residue chain is Bifunctional heparan sulfate N-deacetylase/N-sulfotransferase 2 (883 aa).

At 1–18 (MLQLWKVVRPARQLELHR) the chain is on the cytoplasmic side. The helical; Signal-anchor for type II membrane protein transmembrane segment at 19–39 (LILLLIGFSLVSMGFLAYYVS) threads the bilayer. Residues 40-883 (TSPKAKEPLP…REELQHSSVG (844 aa)) lie on the Lumenal side of the membrane. The tract at residues 41–597 (SPKAKEPLPL…KRHKDIWSKE (557 aa)) is heparan sulfate N-deacetylase 2. The tract at residues 49 to 82 (PLPLGDCSSSGAAGPGPARPPVPPRPQRPPETTR) is disordered. Residues 65–77 (PARPPVPPRPQRP) are compositionally biased toward pro residues. Residues N233, N350, and N400 are each glycosylated (N-linked (GlcNAc...) asparagine). The tract at residues 598–883 (KTCDRLPKFL…REELQHSSVG (286 aa)) is heparan sulfate N-sulfotransferase 2. Residue K613 is the For sulfotransferase activity of the active site. A 3'-phosphoadenylyl sulfate-binding site is contributed by 613–617 (KTGTT). N666 is a glycosylation site (N-linked (GlcNAc...) asparagine). A 3'-phosphoadenylyl sulfate-binding site is contributed by S711. N-linked (GlcNAc...) asparagine glycans are attached at residues N726 and N802. A disulfide bridge connects residues C817 and C827. 832–836 (KGRRY) is a binding site for 3'-phosphoadenylyl sulfate.

This sequence belongs to the sulfotransferase 1 family. NDST subfamily. Monomer. In terms of tissue distribution, widely expressed in adult and throughout development.

The protein localises to the golgi apparatus membrane. It catalyses the reaction alpha-D-glucosaminyl-[heparan sulfate](n) + 3'-phosphoadenylyl sulfate = N-sulfo-alpha-D-glucosaminyl-[heparan sulfate](n) + adenosine 3',5'-bisphosphate + 2 H(+). The protein operates within glycan metabolism; heparan sulfate biosynthesis. It functions in the pathway glycan metabolism; heparin biosynthesis. Essential bifunctional enzyme that catalyzes both the N-deacetylation and the N-sulfation of glucosamine (GlcNAc) of the glycosaminoglycan in heparan sulfate. Modifies the GlcNAc-GlcA disaccharide repeating sugar backbone to make N-sulfated heparosan, a prerequisite substrate for later modifications in heparin biosynthesis. Plays a role in determining the extent and pattern of sulfation of heparan sulfate. Required for the exosomal release of SDCBP, CD63 and syndecan. The polypeptide is Bifunctional heparan sulfate N-deacetylase/N-sulfotransferase 2 (Ndst2) (Mus musculus (Mouse)).